The chain runs to 479 residues: ATP synthase subunit beta, chloroplastic (479 aa).

156-163 lines the ATP pocket; it reads GGAGVGKT.

The protein belongs to the ATPase alpha/beta chains family. In terms of assembly, F-type ATPases have 2 components, CF(1) - the catalytic core - and CF(0) - the membrane proton channel. CF(1) has five subunits: alpha(3), beta(3), gamma(1), delta(1), epsilon(1). CF(0) has four main subunits: a(1), b(1), b'(1) and c(9-12).

The protein localises to the plastid. It is found in the chloroplast thylakoid membrane. It carries out the reaction ATP + H2O + 4 H(+)(in) = ADP + phosphate + 5 H(+)(out). Its function is as follows. Produces ATP from ADP in the presence of a proton gradient across the membrane. The catalytic sites are hosted primarily by the beta subunits. The chain is ATP synthase subunit beta, chloroplastic from Trichomanes davallioides (Kilau fern).